The chain runs to 323 residues: Probable inactive poly [ADP-ribose] polymerase SRO2 (323 aa).

One can recognise a PARP catalytic domain in the interval 31–257 (SSVSHAGSSF…FASRPSSPWV (227 aa)). An RST domain is found at 250-321 (SRPSSPWVSF…IKNHKNRNKV (72 aa)).

Interacts with STO.

The protein resides in the nucleus. Functionally, probable inactive ADP-ribosyltransferase that may be involved in stress and developmental responses. The polypeptide is Probable inactive poly [ADP-ribose] polymerase SRO2 (SRO2) (Arabidopsis thaliana (Mouse-ear cress)).